The chain runs to 1272 residues: MDLFDFFRDWDLEQQCHYEQDRSALKKREWERRNQEVQQEDDLFSSGFDLFGEPYKTNKGDALANRVQNTLGNYDEMKDLLTNHSNQNHLVGIPKNSVPQNPNNKNEPSFFPEQKNRIIPPHQDNTHPSAPMPPPSVVILNSTLIHSNRKSKPEWSRDSHNPSTVLASQASGQPNKMQTLTQDQSQAKLEDFFVYPAEQPQIGEAEESNPSAKEDSNPNSSGEDAFKEIFQSNSPEESEFAVQAPGSPLVASSLLAPSSGLSVQNFPPGLYCKTSMGQQKPTAYVRPMDGQDQAPDISPTLKPSIEFENSFGNLSFGTLLDGKPSAASSKTKLPKFTILQTSEVSLPSDPSCVEEILRESQHLTPGFTLQKWNDPTTRASTKMLEDDLKLSSDEDDLEPVKTLTTQCTATELYQAVEKAKPRNNPVNPPLATPQPPPAVQASGGSGSSSESESSSESDSDTESSTTDSESNEAPRVATPEPEPPSTNKWQLDKWLNKVTSQNKSFICGQNETPMETISLPPPIIQPMEVQMKVKTNASQVPAEPKERPLLSLIREKARPRPTQKIPETKALKHKLSTTSETVSQRTIGKKQPKKVEKNTSIDEFTWPKPNITSSTPKEKESVELHDPPRGRNKATAHKPAPRKEPRPNIPLAPEKKKYRGPGKIVPKSREFIETDSSTSDSNTDQEETLQIKVLPPCIISGGNTAKSKEICGASLTLSTLMSSSGSNNNLSISNEEPTFSPIPVMQTEMLSPLRDHENLKNLWVKIDLDLLSRVPGHNSLHAAPAKPDHKETATKPKRQTALTAVEKPAPKGKRKHKPTEVAEKIPEKKQRLEEATTICLLPPCISPAPPHKPPNTRENNSSRRANRRKEEKLFPPPLSPLPEDPPRRRNVSGNNGPFGQDKNIAMTGQITSTKPKRTEGKFCATFKGISVNEGDTPKKASSATITVTNTAIATATVTATAIVTTTVTATATATATTTTTTTTISTITSTITTGLMDSSHLEMTSWAALPLLSSSSTNVRRPKLTFDDSVHNADYYMQEAKKLKHKADALFEKFGKAVNYADAALSFTECGNAMERDPLEAKSPYTMYSETVELLRYAMRLKNFASPLASDGDKKLAVLCYRCLSLLYLRMFKLKKDHAMKYSRSLMEYFKQNASKVAQIPSPWVGNGKNTPSPVSLNNVSPINAMGNCNNGPVTIPQRIHHMAASHVNITSNVLRGYEHWDMADKLTRENKEFFGDLDTLMGPLTQHSSMTNLVRYVRQGLCWLRIDAHLL.

3 disordered regions span residues 93–183 (IPKN…LTQD), 201–225 (QIGE…GEDA), and 283–302 (AYVR…PTLK). The span at 97 to 107 (SVPQNPNNKNE) shows a compositional bias: polar residues. Basic and acidic residues predominate over residues 151-160 (SKPEWSRDSH). Polar residues predominate over residues 161–183 (NPSTVLASQASGQPNKMQTLTQD). The residue at position 391 (Ser-391) is a Phosphoserine. Disordered stretches follow at residues 418-491 (KAKP…KWQL), 535-687 (TNAS…DQEE), 779-829 (SLHA…PEKK), and 842-903 (PPCI…QDKN). Residues 426–438 (VNPPLATPQPPPA) show a composition bias toward pro residues. The segment covering 439 to 452 (VQASGGSGSSSESE) has biased composition (low complexity). At Thr-478 the chain carries Phosphothreonine. Basic and acidic residues predominate over residues 543–558 (EPKERPLLSLIREKAR). Positions 576-586 (STTSETVSQRT) are enriched in polar residues. Positions 616–629 (PKEKESVELHDPPR) are enriched in basic and acidic residues. Residues 630–640 (GRNKATAHKPA) are compositionally biased toward basic residues. Over residues 818–829 (PTEVAEKIPEKK) the composition is skewed to basic and acidic residues. 2 stretches are compositionally biased toward pro residues: residues 844–853 (CISPAPPHKP) and 874–883 (FPPPLSPLPE).

It belongs to the AF4 family.

The protein resides in the nucleus speckle. Its function is as follows. RNA-binding protein. Might be involved in alternative splicing regulation through an interaction with G-quartet RNA structure. This chain is AF4/FMR2 family member 2 (AFF2), found in Pan troglodytes (Chimpanzee).